Reading from the N-terminus, the 242-residue chain is Cysteine-rich venom protein VAR11 (242 aa).

The N-terminal stretch at 1-19 is a signal peptide; the sequence is MILLKLYLTLAAILCQSRG. The SCP domain occupies 41 to 169; the sequence is NKHNDLRRTV…SLKYFQVCQY (129 aa). Disulfide bonds link Cys-77–Cys-156, Cys-95–Cys-170, Cys-151–Cys-167, Cys-189–Cys-196, Cys-192–Cys-201, Cys-205–Cys-237, Cys-214–Cys-231, and Cys-223–Cys-235. Positions 205–237 constitute a ShKT domain; the sequence is CAYNDDYTSCPDLTKQVGCNHPVTANCKASCQC.

The protein belongs to the CRISP family. Expressed by the venom gland.

Its subcellular location is the secreted. In terms of biological role, blocks ryanodine receptors, and potassium channels. The sequence is that of Cysteine-rich venom protein VAR11 from Varanus varius (Lace monitor lizard).